The primary structure comprises 166 residues: Regulatory protein RecX (166 aa).

The protein belongs to the RecX family.

Its subcellular location is the cytoplasm. Its function is as follows. Modulates RecA activity. In Salmonella paratyphi C (strain RKS4594), this protein is Regulatory protein RecX.